We begin with the raw amino-acid sequence, 331 residues long: MKISQAVGNACTVPASNVETHNNNPSRESKIIYLPGTNCEIKSQALLSAFTSYRVGGAAELYVAPRNIEALQASLKYAQEHNLRVTTLGAGSNLLVSDRGISGLVIATRHLRYNRFDHQTGQVTVAAGESIPSLAWEIAKLGWQGFEWAVGIPGTVGGAVVMNAGAHNSCIADILVSAQVLSPDGTIETLTPEELGYGYRTSLLQGSNRVVTQATFQLQPGFDPAYITATTREHKQMRLTTQPYNFPSCGSVFRNPKPYSAGWLIEQSGLKGYQIGGAQVAHLHANFIVNRGGAKANDIFCLIRHIQQEVQERWSILLEPEVKMLGEFQAA.

In terms of domain architecture, FAD-binding PCMH-type spans 54-221 (RVGGAAELYV…TQATFQLQPG (168 aa)). Arginine 200 is a catalytic residue. Catalysis depends on serine 251, which acts as the Proton donor. Glutamate 321 is an active-site residue.

This sequence belongs to the MurB family. FAD is required as a cofactor.

The protein localises to the cytoplasm. The catalysed reaction is UDP-N-acetyl-alpha-D-muramate + NADP(+) = UDP-N-acetyl-3-O-(1-carboxyvinyl)-alpha-D-glucosamine + NADPH + H(+). It participates in cell wall biogenesis; peptidoglycan biosynthesis. Cell wall formation. This is UDP-N-acetylenolpyruvoylglucosamine reductase from Trichormus variabilis (strain ATCC 29413 / PCC 7937) (Anabaena variabilis).